The sequence spans 200 residues: Nucleoside triphosphate pyrophosphatase (200 aa).

D75 (proton acceptor) is an active-site residue.

The protein belongs to the Maf family. A divalent metal cation is required as a cofactor.

It is found in the cytoplasm. It catalyses the reaction a ribonucleoside 5'-triphosphate + H2O = a ribonucleoside 5'-phosphate + diphosphate + H(+). The enzyme catalyses a 2'-deoxyribonucleoside 5'-triphosphate + H2O = a 2'-deoxyribonucleoside 5'-phosphate + diphosphate + H(+). Functionally, nucleoside triphosphate pyrophosphatase. May have a dual role in cell division arrest and in preventing the incorporation of modified nucleotides into cellular nucleic acids. The polypeptide is Nucleoside triphosphate pyrophosphatase (Synechococcus sp. (strain CC9311)).